Reading from the N-terminus, the 365-residue chain is WAT1-related protein At4g01430 (365 aa).

Helical transmembrane passes span 7-27 (WAPV…NALV), 39-59 (IFGA…SYIW), 76-96 (FISG…GLSY), 100-120 (TVSM…ALIF), 132-152 (AGVL…LLTF), 183-203 (WLLG…WMLF), 216-236 (YSST…LSLY), 250-270 (FVIL…TVVT), 280-300 (VFVS…DFLI), and 305-325 (LYLG…VFLW). In terms of domain architecture, EamA 1 spans 20 to 151 (MGSVNALVKK…ICIMGAMLLT (132 aa)). In terms of domain architecture, EamA 2 spans 216–324 (YSSTCLMSVF…VTITGLYVFL (109 aa)). A disordered region spans residues 339–365 (LNSSQFSQNKDNEDHTIANHKDTNLPV). A compositionally biased stretch (basic and acidic residues) spans 348 to 365 (KDNEDHTIANHKDTNLPV).

Belongs to the drug/metabolite transporter (DMT) superfamily. Plant drug/metabolite exporter (P-DME) (TC 2.A.7.4) family.

It is found in the membrane. The sequence is that of WAT1-related protein At4g01430 from Arabidopsis thaliana (Mouse-ear cress).